The following is a 383-amino-acid chain: S-adenosylmethionine synthase (383 aa).

Histidine 15 serves as a coordination point for ATP. Aspartate 17 is a binding site for Mg(2+). Glutamate 43 contacts K(+). L-methionine is bound by residues glutamate 56 and glutamine 99. Positions 99 to 109 (QSPDINQGVDR) are flexible loop. Residues 164-166 (DAK), 230-231 (RF), aspartate 239, 245-246 (RK), alanine 262, and lysine 266 contribute to the ATP site. Position 239 (aspartate 239) interacts with L-methionine. An L-methionine-binding site is contributed by lysine 270.

It belongs to the AdoMet synthase family. In terms of assembly, homotetramer; dimer of dimers. Requires Mg(2+) as cofactor. K(+) serves as cofactor.

The protein localises to the cytoplasm. The catalysed reaction is L-methionine + ATP + H2O = S-adenosyl-L-methionine + phosphate + diphosphate. Its pathway is amino-acid biosynthesis; S-adenosyl-L-methionine biosynthesis; S-adenosyl-L-methionine from L-methionine: step 1/1. Functionally, catalyzes the formation of S-adenosylmethionine (AdoMet) from methionine and ATP. The overall synthetic reaction is composed of two sequential steps, AdoMet formation and the subsequent tripolyphosphate hydrolysis which occurs prior to release of AdoMet from the enzyme. The polypeptide is S-adenosylmethionine synthase (Shewanella baltica (strain OS155 / ATCC BAA-1091)).